We begin with the raw amino-acid sequence, 937 residues long: AP-2 complex subunit beta (937 aa).

Residue Thr-2 is modified to N-acetylthreonine. Ser-4 is subject to Phosphoserine. The residue at position 265 (Lys-265) is an N6-acetyllysine. A Phosphotyrosine; by SRC modification is found at Tyr-737. Positions Trp-841–Asn-937 are interaction with ARRB1. Tyr-928 is modified (phosphotyrosine).

It belongs to the adaptor complexes large subunit family. Adaptor protein complex 2 (AP-2) is a heterotetramer composed of two large adaptins (alpha-type subunit AP2A1 or AP2A2 and beta-type subunit AP2B1), a medium adaptin (mu-type subunit AP2M1) and a small adaptin (sigma-type subunit AP2S1). Interacts with EPN1. Interacts with EPS15; clathrin competes with EPS15. Interacts with SNAP91; clathrin competes with SNAP91. Interacts with CLTC; clathrin competes with EPS15, SNAP91 and PIP5K1C. Interacts with LDLRAP1. Interacts with AMPH and BIN1. Interacts with ARF6 (GDP-bound). Interacts (dephosphorylated at Tyr-737) with ARRB1; phosphorylation of AP2B1 at Tyr-737 disrupts the interaction. Interacts with SLC2A8. Interacts with SCYL1 and SCYL2. Interacts with TGFBR1 and TGFBR2. Interacts with PIP5K1C; clathrin competes with PIP5K1C. Interacts with DENND1B, but not with DENND1A, nor DENND1C. Interacts with FCHO1. Interacts with RFTN1. Interacts with KIAA1107. Together with AP2A1 or AP2A2 and AP2M1, it interacts with ADAM10; this interaction facilitates ADAM10 endocytosis from the plasma membrane during long-term potentiation in hippocampal neurons. In terms of processing, phosphorylation at Tyr-737 by SRC occurs at the plasma membrane in clathrin-coated vesicles (CCVs). Expressed in the brain (at protein level).

Its subcellular location is the cell membrane. It is found in the membrane. It localises to the coated pit. Its function is as follows. Component of the adaptor protein complex 2 (AP-2). Adaptor protein complexes function in protein transport via transport vesicles in different membrane traffic pathways. Adaptor protein complexes are vesicle coat components and appear to be involved in cargo selection and vesicle formation. AP-2 is involved in clathrin-dependent endocytosis in which cargo proteins are incorporated into vesicles surrounded by clathrin (clathrin-coated vesicles, CCVs) which are destined for fusion with the early endosome. The clathrin lattice serves as a mechanical scaffold but is itself unable to bind directly to membrane components. Clathrin-associated adaptor protein (AP) complexes which can bind directly to both the clathrin lattice and to the lipid and protein components of membranes are considered to be the major clathrin adaptors contributing the CCV formation. AP-2 also serves as a cargo receptor to selectively sort the membrane proteins involved in receptor-mediated endocytosis. AP-2 seems to play a role in the recycling of synaptic vesicle membranes from the presynaptic surface. AP-2 recognizes Y-X-X-[FILMV] (Y-X-X-Phi) and [ED]-X-X-X-L-[LI] endocytosis signal motifs within the cytosolic tails of transmembrane cargo molecules. AP-2 may also play a role in maintaining normal post-endocytic trafficking through the ARF6-regulated, non-clathrin pathway. During long-term potentiation in hippocampal neurons, AP-2 is responsible for the endocytosis of ADAM10. The AP-2 beta subunit acts via its C-terminal appendage domain as a scaffolding platform for endocytic accessory proteins; at least some clathrin-associated sorting proteins (CLASPs) are recognized by their [DE]-X(1,2)-F-X-X-[FL]-X-X-X-R motif. The AP-2 beta subunit binds to clathrin heavy chain, promoting clathrin lattice assembly; clathrin displaces at least some CLASPs from AP2B1 which probably then can be positioned for further coat assembly. This Homo sapiens (Human) protein is AP-2 complex subunit beta (AP2B1).